Here is a 365-residue protein sequence, read N- to C-terminus: UDP-N-acetylglucosamine--N-acetylmuramyl-(pentapeptide) pyrophosphoryl-undecaprenol N-acetylglucosamine transferase (365 aa).

UDP-N-acetyl-alpha-D-glucosamine-binding positions include 11–13 (TGG), Asn-124, Arg-165, Ser-192, Ile-246, and Gln-291.

Belongs to the glycosyltransferase 28 family. MurG subfamily.

The protein localises to the cell inner membrane. The enzyme catalyses di-trans,octa-cis-undecaprenyl diphospho-N-acetyl-alpha-D-muramoyl-L-alanyl-D-glutamyl-meso-2,6-diaminopimeloyl-D-alanyl-D-alanine + UDP-N-acetyl-alpha-D-glucosamine = di-trans,octa-cis-undecaprenyl diphospho-[N-acetyl-alpha-D-glucosaminyl-(1-&gt;4)]-N-acetyl-alpha-D-muramoyl-L-alanyl-D-glutamyl-meso-2,6-diaminopimeloyl-D-alanyl-D-alanine + UDP + H(+). It participates in cell wall biogenesis; peptidoglycan biosynthesis. Its function is as follows. Cell wall formation. Catalyzes the transfer of a GlcNAc subunit on undecaprenyl-pyrophosphoryl-MurNAc-pentapeptide (lipid intermediate I) to form undecaprenyl-pyrophosphoryl-MurNAc-(pentapeptide)GlcNAc (lipid intermediate II). The chain is UDP-N-acetylglucosamine--N-acetylmuramyl-(pentapeptide) pyrophosphoryl-undecaprenol N-acetylglucosamine transferase from Nitratidesulfovibrio vulgaris (strain ATCC 29579 / DSM 644 / CCUG 34227 / NCIMB 8303 / VKM B-1760 / Hildenborough) (Desulfovibrio vulgaris).